The following is a 605-amino-acid chain: MSTVAPPADQAADVLKKLSLDSKSRTLEIPEPTKKTGVYQYGAMDSNGQVPSFDRSLSPMLPSDALDPSVFYVPNVYQQPYYYGYGSDYTGYTNSESVDMTSGAYGENASLVYPQGYGYAAFPYSPATSPAPQLGGDGQLYGAQQYQYPFPLTASSGPFASSVPASTQSKLSTNKAANSASAGIPKGMNGSAPVKPLNQSALYGNSALGGGLAAGYQDPRYSYDGFYTPVSWHDGSNFSDVQRSVSGSGVASSYSKANNNVPATRNQNSSSNSHYTSMYQPASMTGYAAQGYYDRVSPNKSYGQYGSTVRSGMGYGSSGYGSRTNERGWLNTDNKYRSRGRGNSYFYGNENIDGLNELNRGPRAKGTKATEEVSSEEVKKQTFDESNTEETVTCVLPDREECNRDDFPVEYKDAKFFIIKSYSEDDVHKSIKYNVWASTPNGNKKLDAAYQEAQQKSSGCPVFLFFSVNASGQFIGLAEMKGPVDFNKNIEYWQQDKWTGSFPLKWHILKDVPNSLLKHITLEYNENKPVTNSRDTQEVKLEQGLKVVKIFKEHNSKTCILDDFSFYEARQKTILEKKAKQQQSQKQVWEGKTNDEKPGTVDSTM.

2 disordered regions span residues 249 to 274 (GVASSYSKANNNVPATRNQNSSSNSH) and 357 to 384 (ELNRGPRAKGTKATEEVSSEEVKKQTFD). The segment covering 256–274 (KANNNVPATRNQNSSSNSH) has biased composition (polar residues). The span at 368-383 (KATEEVSSEEVKKQTF) shows a compositional bias: basic and acidic residues. Residues 414–551 (AKFFIIKSYS…EQGLKVVKIF (138 aa)) enclose the YTH domain. RNA is bound by residues 420–422 (KSY), Asp-426, 436–437 (WA), Asn-469, Trp-493, Trp-498, and Trp-506. Residues 580–605 (KQQQSQKQVWEGKTNDEKPGTVDSTM) form a disordered region.

In terms of tissue distribution, expressed in the shoot apex, at the sites of leaf formation, and in emerging leaves.

The protein localises to the cytoplasm. Functionally, specifically recognizes and binds N6-methyladenosine (m6A)-containing RNAs, and regulates mRNA stability. M6A is a modification present at internal sites of mRNAs and some non-coding RNAs and plays a role in mRNA stability and processing. Required for the correct timing of leaf formation and normal leaf morphology. The chain is YTH domain-containing protein ECT4 from Arabidopsis thaliana (Mouse-ear cress).